Reading from the N-terminus, the 107-residue chain is MSAQDYYGNSASKQSYSRPSAPPPGYETASRGYAPSQSQQNYYPPQQQQQQYQQQPQYYQQQQPQYYQQHPQQPIYVQQQPASSGNEDCLAGCLAGLCLCCTLDMLF.

The span at 1-18 (MSAQDYYGNSASKQSYSR) shows a compositional bias: polar residues. A disordered region spans residues 1–86 (MSAQDYYGNS…VQQQPASSGN (86 aa)). Position 2 is an N-acetylserine (Ser-2). Residue Lys-13 forms a Glycyl lysine isopeptide (Lys-Gly) (interchain with G-Cter in ubiquitin) linkage. Residues 35–81 (PSQSQQNYYPPQQQQQQYQQQPQYYQQQQPQYYQQHPQQPIYVQQQP) are compositionally biased toward low complexity.

Belongs to the CYSTM1 family.

Its subcellular location is the cell membrane. The polypeptide is Lipid-anchored protein YDL012C (Saccharomyces cerevisiae (strain ATCC 204508 / S288c) (Baker's yeast)).